The sequence spans 793 residues: Outer membrane protein assembly factor BamA (793 aa).

An N-terminal signal peptide occupies residues 1–19 (MKKLLIASLLFGTTTTVFA). 5 POTRA domains span residues 22–89 (FVAK…VVAK), 90–170 (SIIS…INED), 173–259 (AKLA…VNEG), 262–341 (YDLR…VDAG), and 344–418 (LTVR…VKER).

It belongs to the BamA family. In terms of assembly, part of the Bam complex.

It is found in the cell outer membrane. Its function is as follows. Part of the outer membrane protein assembly complex, which is involved in assembly and insertion of beta-barrel proteins into the outer membrane. The polypeptide is Outer membrane protein assembly factor BamA (Haemophilus influenzae).